Here is a 275-residue protein sequence, read N- to C-terminus: Bis(5'-nucleosyl)-tetraphosphatase, symmetrical (275 aa).

It belongs to the Ap4A hydrolase family.

It carries out the reaction P(1),P(4)-bis(5'-adenosyl) tetraphosphate + H2O = 2 ADP + 2 H(+). Functionally, hydrolyzes diadenosine 5',5'''-P1,P4-tetraphosphate to yield ADP. In Stutzerimonas stutzeri (strain A1501) (Pseudomonas stutzeri), this protein is Bis(5'-nucleosyl)-tetraphosphatase, symmetrical.